The chain runs to 372 residues: Innexin shaking-B (372 aa).

The Cytoplasmic portion of the chain corresponds to 1–21 (MLDIFRGLKNLVKVSHVKTDS). Residues 22 to 42 (IVFRLHYSITVMILMSFSLII) form a helical membrane-spanning segment. At 43 to 110 (TTRQYVGNPI…PADKKHYKYY (68 aa)) the chain is on the extracellular side. A helical membrane pass occupies residues 111-131 (QWVCFCLFFQAILFYTPRWLW). At 132–182 (KSWEGGKIHALIMDLDIGICSEAEKKQKKKLLLDYLWENLRYHNWWAYRYY) the chain is on the cytoplasmic side. A helical transmembrane segment spans residues 183–203 (VCELLALINVIGQMFLMNRFF). Residues 204–267 (DGEFITFGLK…ILPLNVVNEK (64 aa)) are Extracellular-facing. The helical transmembrane segment at 268–288 (IYIFLWFWFILLTFLTLLTLI) threads the bilayer. Topologically, residues 289–372 (YRVVIIFSPR…PGLKGEIQDA (84 aa)) are cytoplasmic.

It belongs to the pannexin family. As to quaternary structure, monomer (isoform Lethal). As to expression, isoform Neural is expressed in synapses of giant fibers (GF), in a large thoracic cell in location of postsynaptic target and optic lobe lamina and medulla. Isoform Lethal is expressed in embryonic mesodermal derivatives. During metamorphosis, both isoforms are dynamically expressed in pupal nervous system.

The protein localises to the cell membrane. It is found in the cell junction. The protein resides in the gap junction. Structural component of the gap junctions at electrical synapses in distal and mid-depth levels in the lamina. Isoform Lethal forms voltage sensitive intercellular channels through homotypic interactions. In Drosophila melanogaster (Fruit fly), this protein is Innexin shaking-B (shakB).